A 1531-amino-acid chain; its full sequence is Multidrug resistance-associated protein 1 (1531 aa).

Topologically, residues Met-1–Phe-33 are extracellular. An N-linked (GlcNAc...) asparagine glycan is attached at Asn-19. A helical membrane pass occupies residues Gln-34–Phe-54. The Cytoplasmic portion of the chain corresponds to Leu-55–Lys-74. Residues Thr-75–Glu-95 traverse the membrane as a helical segment. The Extracellular segment spans residues Arg-96–Ile-100. Residues Phe-101 to Thr-121 traverse the membrane as a helical segment. Over Phe-122 to Gln-133 the chain is Cytoplasmic. The helical transmembrane segment at Ser-134 to Arg-154 threads the bilayer. At Ser-155 to Asp-172 the chain is on the extracellular side. The helical transmembrane segment at Met-173–Asp-193 threads the bilayer. At Arg-194–Val-316 the chain is on the cytoplasmic side. Tyr-277 is modified (phosphotyrosine). Ser-289 carries the phosphoserine modification. Residues Leu-317–Leu-337 form a helical membrane-spanning segment. The ABC transmembrane type-1 1 domain occupies Phe-325–Gln-608. At Met-338–Gly-363 the chain is on the extracellular side. Residues Tyr-364–Tyr-384 traverse the membrane as a helical segment. Over Phe-385–Tyr-440 the chain is Cytoplasmic. The helical transmembrane segment at Ile-441–Asn-461 threads the bilayer. Topologically, residues Leu-462–Pro-464 are extracellular. A helical transmembrane segment spans residues Pro-465–Met-485. Residues Lys-486–Ala-547 are Cytoplasmic-facing. Residue Lys-503 is modified to N6-succinyllysine. A helical transmembrane segment spans residues Val-548–Tyr-568. The Extracellular portion of the chain corresponds to Val-569 to Asn-590. The helical transmembrane segment at Ile-591–Val-611 threads the bilayer. Over Ser-612–Met-967 the chain is Cytoplasmic. Residues Ile-644–Thr-868 enclose the ABC transporter 1 domain. Position 678 to 685 (Gly-678 to Ser-685) interacts with ATP. The interval Ser-871–Ala-893 is disordered. 3 positions are modified to phosphoserine: Ser-905, Ser-915, and Ser-930. The tract at residues Ser-917–Gly-938 is disordered. A compositionally biased stretch (polar residues) spans Gly-922–Glu-933. A helical transmembrane segment spans residues Lys-968–Ala-988. The ABC transmembrane type-1 2 domain occupies Ser-975–Thr-1256. The Extracellular portion of the chain corresponds to Ala-989–Ser-1025. Asn-1006 carries an N-linked (GlcNAc...) asparagine glycan. A helical transmembrane segment spans residues Gln-1026 to Arg-1046. The Cytoplasmic segment spans residues Cys-1047 to Glu-1089. The helical transmembrane segment at Val-1090–Leu-1110 threads the bilayer. Residue Ala-1111 is a topological domain, extracellular. Residues Thr-1112–Phe-1132 form a helical membrane-spanning segment. Residues Tyr-1133–Leu-1203 are Cytoplasmic-facing. Residues Glu-1204–Ser-1224 traverse the membrane as a helical segment. The Extracellular segment spans residues Leu-1225–Ser-1226. A helical transmembrane segment spans residues Ala-1227–Leu-1247. Over Val-1248–Val-1531 the chain is Cytoplasmic. In terms of domain architecture, ABC transporter 2 spans Val-1293–Asp-1527. Gly-1327–Ser-1334 contacts ATP.

This sequence belongs to the ABC transporter superfamily. ABCC family. Conjugate transporter (TC 3.A.1.208) subfamily.

Its subcellular location is the cell membrane. It is found in the basolateral cell membrane. It catalyses the reaction ATP + H2O + xenobioticSide 1 = ADP + phosphate + xenobioticSide 2.. It carries out the reaction an S-substituted glutathione(in) + ATP + H2O = an S-substituted glutathione(out) + ADP + phosphate + H(+). The catalysed reaction is sphing-4-enine 1-phosphate(in) + ATP + H2O = sphing-4-enine 1-phosphate(out) + ADP + phosphate + H(+). The enzyme catalyses leukotriene C4(in) + ATP + H2O = leukotriene C4(out) + ADP + phosphate + H(+). It catalyses the reaction 17beta-estradiol 17-O-(beta-D-glucuronate)(in) + ATP + H2O = 17beta-estradiol 17-O-(beta-D-glucuronate)(out) + ADP + phosphate + H(+). It carries out the reaction daunorubicin(in) + ATP + H2O = daunorubicin(out) + ADP + phosphate + H(+). The catalysed reaction is vincristine(in) + ATP + H2O = vincristine(out) + ADP + phosphate + H(+). The enzyme catalyses 2',3'-cGAMP(in) + ATP + H2O = 2',3'-cGAMP(out) + ADP + phosphate + H(+). It catalyses the reaction S-[(2E,6E,10E)-geranylgeranyl]-L-glutathione(in) + ATP + H2O = S-[(2E,6E,10E)-geranylgeranyl]-L-glutathione(out) + ADP + phosphate + H(+). It carries out the reaction prostaglandin A2-S-(R)-glutathione(in) + ATP + H2O = prostaglandin A2-S-(R)-glutathione(out) + ADP + phosphate + H(+). The catalysed reaction is prostaglandin A2-S-(S)-glutathione(in) + ATP + H2O = prostaglandin A2-S-(S)-glutathione(out) + ADP + phosphate + H(+). With respect to regulation, MK 571 inhibits sphingosine 1-phosphate and leukotriene C4 export. Mediates export of organic anions and drugs from the cytoplasm. Mediates ATP-dependent transport of glutathione and glutathione conjugates, leukotriene C4, estradiol-17-beta-o-glucuronide, methotrexate, antiviral drugs and other xenobiotics. Confers resistance to anticancer drugs by decreasing accumulation of drug in cells, and by mediating ATP- and GSH-dependent drug export. Hydrolyzes ATP with low efficiency. Catalyzes the export of sphingosine 1-phosphate from mast cells independently of their degranulation. Participates in inflammatory response by allowing export of leukotriene C4 from leukotriene C4-synthesizing cells. Mediates ATP-dependent, GSH-independent cyclic GMP-AMP (cGAMP) export. Thus, by limiting intracellular cGAMP concentrations negatively regulates the cGAS-STING pathway. Exports S-geranylgeranyl-glutathione (GGG) in lymphoid cells and stromal compartments of lymphoid organs. ABCC1 (via extracellular transport) with GGT5 (via GGG catabolism) establish GGG gradients within lymphoid tissues to position P2RY8-positive lymphocytes at germinal centers in lymphoid follicles and restrict their chemotactic transmigration from blood vessels to the bone marrow parenchyma. Mediates basolateral export of GSH-conjugated R- and S-prostaglandin A2 diastereomers in polarized epithelial cells. The polypeptide is Multidrug resistance-associated protein 1 (Macaca fascicularis (Crab-eating macaque)).